The sequence spans 342 residues: tRNA N6-adenosine threonylcarbamoyltransferase (342 aa).

Fe cation-binding residues include histidine 112 and histidine 116. Substrate is bound by residues 134–138, aspartate 167, glycine 180, and asparagine 278; that span reads IVSGG. Residue aspartate 306 participates in Fe cation binding.

This sequence belongs to the KAE1 / TsaD family. The cofactor is Fe(2+).

Its subcellular location is the cytoplasm. It catalyses the reaction L-threonylcarbamoyladenylate + adenosine(37) in tRNA = N(6)-L-threonylcarbamoyladenosine(37) in tRNA + AMP + H(+). Its function is as follows. Required for the formation of a threonylcarbamoyl group on adenosine at position 37 (t(6)A37) in tRNAs that read codons beginning with adenine. Is involved in the transfer of the threonylcarbamoyl moiety of threonylcarbamoyl-AMP (TC-AMP) to the N6 group of A37, together with TsaE and TsaB. TsaD likely plays a direct catalytic role in this reaction. This is tRNA N6-adenosine threonylcarbamoyltransferase from Anaplasma phagocytophilum (strain HZ).